The chain runs to 523 residues: 2-isopropylmalate synthase (523 aa).

In terms of domain architecture, Pyruvate carboxyltransferase spans 5 to 267 (VIIFDTTLRD…HTAINHQEIW (263 aa)). 4 residues coordinate Mn(2+): D14, H202, H204, and N238. The tract at residues 392-523 (RLDYFSVQSG…QHNENNKETV (132 aa)) is regulatory domain.

The protein belongs to the alpha-IPM synthase/homocitrate synthase family. LeuA type 1 subfamily. In terms of assembly, homodimer. Mn(2+) serves as cofactor.

It localises to the cytoplasm. The enzyme catalyses 3-methyl-2-oxobutanoate + acetyl-CoA + H2O = (2S)-2-isopropylmalate + CoA + H(+). The protein operates within amino-acid biosynthesis; L-leucine biosynthesis; L-leucine from 3-methyl-2-oxobutanoate: step 1/4. Its function is as follows. Catalyzes the condensation of the acetyl group of acetyl-CoA with 3-methyl-2-oxobutanoate (2-ketoisovalerate) to form 3-carboxy-3-hydroxy-4-methylpentanoate (2-isopropylmalate). In Escherichia coli O81 (strain ED1a), this protein is 2-isopropylmalate synthase.